Reading from the N-terminus, the 74-residue chain is Protein krueppel (74 aa).

4 C2H2-type zinc fingers span residues 1–4, 10–32, 38–60, and 66–74; these read ERTH, FECP…MRLH, YHCS…LRVH, and YTCEICDGK.

It belongs to the krueppel C2H2-type zinc-finger protein family.

The protein localises to the nucleus. Functionally, krueppel is a gap class segmentation protein. The sequence is that of Protein krueppel (Kr) from Musca domestica (House fly).